The primary structure comprises 139 residues: Holo-[acyl-carrier-protein] synthase (139 aa).

Asp-8 and Glu-57 together coordinate Mg(2+).

The protein belongs to the P-Pant transferase superfamily. AcpS family. Requires Mg(2+) as cofactor.

The protein localises to the cytoplasm. It carries out the reaction apo-[ACP] + CoA = holo-[ACP] + adenosine 3',5'-bisphosphate + H(+). Transfers the 4'-phosphopantetheine moiety from coenzyme A to a Ser of acyl-carrier-protein. The polypeptide is Holo-[acyl-carrier-protein] synthase (Sinorhizobium fredii (strain NBRC 101917 / NGR234)).